We begin with the raw amino-acid sequence, 1110 residues long: Serine/threonine-protein kinase PknK (1110 aa).

The Protein kinase domain occupies 26–283 (FDNVEEIGRG…TAADVGEELR (258 aa)). Residues 32-40 (IGRGGFGVV) and Lys55 each bind ATP. The Proton acceptor role is filled by Asp149. Residues Asn154 and Asp167 each contribute to the Mg(2+) site. Phosphothreonine; by autocatalysis is present on residues Thr179 and Thr181. The tract at residues 308-343 (RSPEAHAAHRHTGGGTPTVPTPPTPATKYRPSVPTG) is disordered.

Belongs to the protein kinase superfamily. Ser/Thr protein kinase family. As to quaternary structure, forms oligomeric complexes in solution. In terms of processing, can autophosphorylate the carboxyl terminal region in addition to Thr-179 and Thr-181.

Its subcellular location is the cytoplasm. It is found in the cell membrane. The protein resides in the secreted. It localises to the cell wall. The enzyme catalyses L-seryl-[protein] + ATP = O-phospho-L-seryl-[protein] + ADP + H(+). It catalyses the reaction L-threonyl-[protein] + ATP = O-phospho-L-threonyl-[protein] + ADP + H(+). Its function is as follows. Key microbial factor involved in regulation of early and late events in tuberculosis infection, and in host-pathogen interactions. In Mycobacterium tuberculosis (strain CDC 1551 / Oshkosh), this protein is Serine/threonine-protein kinase PknK (pknK).